A 157-amino-acid polypeptide reads, in one-letter code: 2-C-methyl-D-erythritol 2,4-cyclodiphosphate synthase (157 aa).

D9 and H11 together coordinate a divalent metal cation. 4-CDP-2-C-methyl-D-erythritol 2-phosphate contacts are provided by residues 9-11 (DVH) and 35-36 (HS). H43 provides a ligand contact to a divalent metal cation. 4-CDP-2-C-methyl-D-erythritol 2-phosphate is bound by residues 57 to 59 (DIG), 62 to 66 (FPDTD), 101 to 107 (AEKPKMA), 133 to 136 (TTTE), F140, and R143.

The protein belongs to the IspF family. Homotrimer. It depends on a divalent metal cation as a cofactor.

The enzyme catalyses 4-CDP-2-C-methyl-D-erythritol 2-phosphate = 2-C-methyl-D-erythritol 2,4-cyclic diphosphate + CMP. The protein operates within isoprenoid biosynthesis; isopentenyl diphosphate biosynthesis via DXP pathway; isopentenyl diphosphate from 1-deoxy-D-xylulose 5-phosphate: step 4/6. In terms of biological role, involved in the biosynthesis of isopentenyl diphosphate (IPP) and dimethylallyl diphosphate (DMAPP), two major building blocks of isoprenoid compounds. Catalyzes the conversion of 4-diphosphocytidyl-2-C-methyl-D-erythritol 2-phosphate (CDP-ME2P) to 2-C-methyl-D-erythritol 2,4-cyclodiphosphate (ME-CPP) with a corresponding release of cytidine 5-monophosphate (CMP). This is 2-C-methyl-D-erythritol 2,4-cyclodiphosphate synthase from Listeria monocytogenes serotype 4a (strain HCC23).